A 243-amino-acid chain; its full sequence is Small ribosomal subunit protein uS3 (243 aa).

A KH type-2 domain is found at 38-106; the sequence is IRKYLNARLA…DIQINIFEVK (69 aa). Residues 214 to 243 are disordered; it reads PNFTQSKESGRGNNGGNNGGKNFKRKKNNR.

The protein belongs to the universal ribosomal protein uS3 family. Part of the 30S ribosomal subunit. Forms a tight complex with proteins S10 and S14.

In terms of biological role, binds the lower part of the 30S subunit head. Binds mRNA in the 70S ribosome, positioning it for translation. This chain is Small ribosomal subunit protein uS3, found in Bacteroides thetaiotaomicron (strain ATCC 29148 / DSM 2079 / JCM 5827 / CCUG 10774 / NCTC 10582 / VPI-5482 / E50).